The chain runs to 118 residues: Cell division protein FtsB (118 aa).

The Cytoplasmic segment spans residues 1-6; that stretch reads MRNWRW. A helical transmembrane segment spans residues 7–24; the sequence is LLLVLAALLAWLQHRFWF. Residues 25-118 are Periplasmic-facing; that stretch reads GPGNSGEVRM…DLSQPRREKR (94 aa). Residues 30-66 are a coiled coil; that stretch reads GEVRMLQVQIVQQHQENERLRQRNASLAAEVKNLKDG. The interval 98–118 is disordered; sequence LPNDTSADHGVDLSQPRREKR. Residues 103–118 show a composition bias toward basic and acidic residues; it reads SADHGVDLSQPRREKR.

This sequence belongs to the FtsB family. In terms of assembly, part of a complex composed of FtsB, FtsL and FtsQ.

It is found in the cell inner membrane. Its function is as follows. Essential cell division protein. May link together the upstream cell division proteins, which are predominantly cytoplasmic, with the downstream cell division proteins, which are predominantly periplasmic. This Xylella fastidiosa (strain M23) protein is Cell division protein FtsB.